A 457-amino-acid polypeptide reads, in one-letter code: UPF0328 protein ECU05_0030 (457 aa).

Disordered regions lie at residues 1 to 112 (MPRP…PTAT) and 157 to 183 (VKSQ…NPRI). The segment covering 74–94 (HTEGCHTHEANPEPNTKHTET) has biased composition (basic and acidic residues). Pro residues predominate over residues 102–112 (CPPPHPGPTAT).

Belongs to the UPF0328 family.

This chain is UPF0328 protein ECU05_0030, found in Encephalitozoon cuniculi (strain GB-M1) (Microsporidian parasite).